Here is a 203-residue protein sequence, read N- to C-terminus: Guanylate kinase (203 aa).

Positions 4 to 183 (GKLFVISAPS…ASTLLKSIIW (180 aa)) constitute a Guanylate kinase-like domain. Residue 11–18 (APSGAGKT) coordinates ATP.

This sequence belongs to the guanylate kinase family.

It is found in the cytoplasm. It catalyses the reaction GMP + ATP = GDP + ADP. In terms of biological role, essential for recycling GMP and indirectly, cGMP. This is Guanylate kinase from Desulfotalea psychrophila (strain LSv54 / DSM 12343).